A 462-amino-acid polypeptide reads, in one-letter code: MAEQLYLENIDEFVTDQNKIVTYKWLSYTLGVHVNQAKQMLYEYVERKRKENSGAQLHVTYLVSGSLIQNGHSCHKVAVVREDKLEAVKSKLAVTASIHVYSIQKAMLKDSGPLFNTDYDILKSNLQNCSKFSAIQCAAAVPRAPAESPSSRKYEQSNLQAASEAQASELTTNGHGPPASKQASQQPKGIMGMLISKAATKTQDTNKETKPEAREVTSASSAGGKAPGKGSVMSNFFGKAAMNKLKVNLDSEQAVKEEKTVEQPPVSVTEPKLAAPPAQKKSSRKSEPGKVQQKEKSSRGKRVDLSDEEAKETEHLKKKRRRIKLPQSDSSEDEVFEDSPEMYEADSPSPPPVSPPPDPMPKTEPPPVKRSSGETKRRRKRVLKSKTFVDEEGCIVTEKVYESESCTDSEEELKMKPASAHKPPAAAVKREPREERKGPKKGAAALGKANRQVSITGFFQKK.

The residue at position 2 (Ala2) is an N-acetylalanine. 4 disordered regions span residues 144 to 186, 200 to 230, 254 to 384, and 403 to 462; these read APAE…ASQQ, TKTQ…PGKG, AVKE…RVLK, and SESC…FQKK. The segment covering 156–174 has biased composition (polar residues); the sequence is QSNLQAASEAQASELTTNG. The segment covering 204–215 has biased composition (basic and acidic residues); the sequence is DTNKETKPEARE. The span at 218 to 230 shows a compositional bias: low complexity; sequence SASSAGGKAPGKG. A Glycyl lysine isopeptide (Lys-Gly) (interchain with G-Cter in SUMO); alternate cross-link involves residue Lys256. Lys256 is covalently cross-linked (Glycyl lysine isopeptide (Lys-Gly) (interchain with G-Cter in SUMO2); alternate). Lys259 is covalently cross-linked (Glycyl lysine isopeptide (Lys-Gly) (interchain with G-Cter in SUMO2)). Basic and acidic residues predominate over residues 284-305; it reads RKSEPGKVQQKEKSSRGKRVDL. A Phosphoserine modification is found at Ser306. Acidic residues predominate over residues 330-344; it reads SSEDEVFEDSPEMYE. Residues 348-368 show a composition bias toward pro residues; that stretch reads PSPPPVSPPPDPMPKTEPPPV. Residues Ser403 and Ser405 each carry the phosphoserine modification. Thr407 is modified (phosphothreonine). Position 409 is a phosphoserine (Ser409). Residues 416 to 427 show a composition bias toward low complexity; that stretch reads KPASAHKPPAAA. A compositionally biased stretch (basic and acidic residues) spans 428 to 437; the sequence is VKREPREERK. Residue Lys429 forms a Glycyl lysine isopeptide (Lys-Gly) (interchain with G-Cter in SUMO); alternate linkage. Lys429 participates in a covalent cross-link: Glycyl lysine isopeptide (Lys-Gly) (interchain with G-Cter in SUMO2); alternate. Over residues 451–462 the composition is skewed to polar residues; it reads RQVSITGFFQKK. The PIP-box signature appears at 452-459; that stretch reads QVSITGFF. Residue Ser454 is modified to Phosphoserine.

As to quaternary structure, component of both the DNA polymerase delta and DNA polymerase zeta complexes. The tetrameric DNA polymerase delta complex (Pol-delta4), which consists of POLD1/p125, POLD2/p50, POLD3/p66/p68 and POLD4/p12, with POLD1 bearing DNA polymerase and 3' to 5' proofreading exonuclease activities. Within this complex, directly interacts with POLD2. Following stress caused by DNA damaging agents or by replication stress, POLD4 is degraded and Pol-delta4 is converted into a trimeric form of the complex (Pol-delta3), which consists of POLD1, POLD2 and POLD3. Pol-delta3 is the major form occurring at S phase replication sites, as well as DNA damage sites. Directly interacts with PCNA, as do POLD1 and POLD4; this interaction stimulates Pol-delta polymerase activity. POLD3 phosphorylation at Ser-454 impairs PCNA binding. Component of the DNA polymerase zeta complex (POLZ), which consists of REV3L, MAD2L2, POLD2 and POLD3, with REV3L bearing DNA polymerase catalytic activity. The DNA polymerase delta complex interacts with POLDIP2; this interaction is probably mediated through direct binding to POLD2. Post-translationally, ubiquitinated, but not targeted to the proteasome. Sumoylated. Sumoylation by SUMO3 may be predominant. In terms of processing, phosphorylation at Ser-454 is thought to decrease the affinity for PCNA and Pol-delta4 processivity. May be phosphorylated by CDK1-cyclin-A complex, as well as CDK2-cyclin-A and CDK2-cyclin-E complexes. PCNA interferes with CDK-cyclin phosphorylation.

It is found in the cytoplasm. The protein localises to the nucleus. Accessory component of both the DNA polymerase delta complex and the DNA polymerase zeta complex. As a component of the trimeric and tetrameric DNA polymerase delta complexes (Pol-delta3 and Pol-delta4, respectively), plays a role in high fidelity genome replication, including in lagging strand synthesis, and repair. Required for optimal Pol-delta activity. Stabilizes the Pol-delta complex and plays a major role in Pol-delta stimulation by PCNA. Pol-delta3 and Pol-delta4 are characterized by the absence or the presence of POLD4. They exhibit differences in catalytic activity. Most notably, Pol-delta3 shows higher proofreading activity than Pol-delta4. Although both Pol-delta3 and Pol-delta4 process Okazaki fragments in vitro, Pol-delta3 may also be better suited to fulfill this task, exhibiting near-absence of strand displacement activity compared to Pol-delta4 and stalling on encounter with the 5'-blocking oligonucleotides. Pol-delta3 idling process may avoid the formation of a gap, while maintaining a nick that can be readily ligated. Along with DNA polymerase kappa, DNA polymerase delta carries out approximately half of nucleotide excision repair (NER) synthesis following UV irradiation. In this context, POLD3, along with PCNA and RFC1-replication factor C complex, is required to recruit POLD1, the catalytic subunit of the polymerase delta complex, to DNA damage sites. Under conditions of DNA replication stress, required for the repair of broken replication forks through break-induced replication (BIR). Involved in the translesion synthesis (TLS) of templates carrying O6-methylguanine or abasic sites performed by Pol-delta4, independently of DNA polymerase zeta (REV3L) or eta (POLH). Facilitates abasic site bypass by DNA polymerase delta by promoting extension from the nucleotide inserted opposite the lesion. Also involved in TLS, as a component of the tetrameric DNA polymerase zeta complex. Along with POLD2, dramatically increases the efficiency and processivity of DNA synthesis of the DNA polymerase zeta complex compared to the minimal zeta complex, consisting of only REV3L and REV7. The sequence is that of DNA polymerase delta subunit 3 (Pold3) from Mus musculus (Mouse).